Reading from the N-terminus, the 361-residue chain is Phospho-N-acetylmuramoyl-pentapeptide-transferase (361 aa).

A run of 10 helical transmembrane segments spans residues 27-47 (GALF…ISLL), 72-92 (TPTM…FLWA), 99-119 (VWIT…DDYL), 139-159 (ALIA…GLAY), 169-189 (AIVN…VGAG), 200-220 (GLAI…AYLV), 240-260 (LAVV…FNAP), 264-284 (IFMG…VAVA), 289-309 (IVLA…IIQV), and 338-358 (QVVI…LATL).

This sequence belongs to the glycosyltransferase 4 family. MraY subfamily. Mg(2+) serves as cofactor.

It is found in the cell inner membrane. The enzyme catalyses UDP-N-acetyl-alpha-D-muramoyl-L-alanyl-gamma-D-glutamyl-meso-2,6-diaminopimeloyl-D-alanyl-D-alanine + di-trans,octa-cis-undecaprenyl phosphate = di-trans,octa-cis-undecaprenyl diphospho-N-acetyl-alpha-D-muramoyl-L-alanyl-D-glutamyl-meso-2,6-diaminopimeloyl-D-alanyl-D-alanine + UMP. Its pathway is cell wall biogenesis; peptidoglycan biosynthesis. Functionally, catalyzes the initial step of the lipid cycle reactions in the biosynthesis of the cell wall peptidoglycan: transfers peptidoglycan precursor phospho-MurNAc-pentapeptide from UDP-MurNAc-pentapeptide onto the lipid carrier undecaprenyl phosphate, yielding undecaprenyl-pyrophosphoryl-MurNAc-pentapeptide, known as lipid I. In Methylobacterium sp. (strain 4-46), this protein is Phospho-N-acetylmuramoyl-pentapeptide-transferase.